The chain runs to 358 residues: DNA integrity scanning protein DisA (358 aa).

Positions 9 to 147 (KQDLSEILQF…ENMKYILKDI (139 aa)) constitute a DAC domain. ATP-binding positions include Gly76, Leu94, and 107 to 111 (MRHRT).

Belongs to the DisA family. As to quaternary structure, homooctamer. The cofactor is Mg(2+).

The catalysed reaction is 2 ATP = 3',3'-c-di-AMP + 2 diphosphate. In terms of biological role, participates in a DNA-damage check-point that is active prior to asymmetric division when DNA is damaged. DisA forms globular foci that rapidly scan along the chromosomes during sporulation, searching for lesions. When a lesion is present, DisA pauses at the lesion site. This triggers a cellular response that culminates in a temporary block in sporulation initiation. Its function is as follows. Also has diadenylate cyclase activity, catalyzing the condensation of 2 ATP molecules into cyclic di-AMP (c-di-AMP). c-di-AMP acts as a signaling molecule that couples DNA integrity with progression of sporulation. The rise in c-di-AMP level generated by DisA while scanning the chromosome, operates as a positive signal that advances sporulation; upon encountering a lesion, the DisA focus arrests at the damaged site and halts c-di-AMP synthesis. The chain is DNA integrity scanning protein DisA from Bacillus licheniformis (strain ATCC 14580 / DSM 13 / JCM 2505 / CCUG 7422 / NBRC 12200 / NCIMB 9375 / NCTC 10341 / NRRL NRS-1264 / Gibson 46).